A 163-amino-acid polypeptide reads, in one-letter code: Nucleotide-binding protein PC1_1036 (163 aa).

Belongs to the YajQ family.

Functionally, nucleotide-binding protein. In Pectobacterium carotovorum subsp. carotovorum (strain PC1), this protein is Nucleotide-binding protein PC1_1036.